The following is a 75-amino-acid chain: Small ribosomal subunit protein bS18 (75 aa).

Alanine 2 carries the post-translational modification N-acetylalanine.

This sequence belongs to the bacterial ribosomal protein bS18 family. As to quaternary structure, part of the 30S ribosomal subunit. Forms a tight heterodimer with protein bS6.

Functionally, binds as a heterodimer with protein bS6 to the central domain of the 16S rRNA, where it helps stabilize the platform of the 30S subunit. This is Small ribosomal subunit protein bS18 (rpsR) from Salmonella typhimurium (strain LT2 / SGSC1412 / ATCC 700720).